A 448-amino-acid polypeptide reads, in one-letter code: Homogentisate 1,2-dioxygenase (448 aa).

The Proton acceptor role is filled by His-303. Residues His-346 and Glu-352 each contribute to the Fe cation site. Residues Tyr-361 and His-382 each coordinate homogentisate. Position 382 (His-382) interacts with Fe cation.

The protein belongs to the homogentisate dioxygenase family. Hexamer; dimer of trimers. Requires Fe cation as cofactor.

It catalyses the reaction homogentisate + O2 = 4-maleylacetoacetate + H(+). It participates in amino-acid degradation; L-phenylalanine degradation; acetoacetate and fumarate from L-phenylalanine: step 4/6. Functionally, involved in the catabolism of homogentisate (2,5-dihydroxyphenylacetate or 2,5-OH-PhAc), a central intermediate in the degradation of phenylalanine and tyrosine. Catalyzes the oxidative ring cleavage of the aromatic ring of homogentisate to yield maleylacetoacetate. In Rhodopseudomonas palustris (strain ATCC BAA-98 / CGA009), this protein is Homogentisate 1,2-dioxygenase.